The primary structure comprises 838 residues: Multiphosphoryl transfer protein (838 aa).

The PTS EIIA type-2 domain occupies 7–147 (APVTPDLVRL…AVIVAALTGD (141 aa)). The Tele-phosphohistidine intermediate; for EIIA activity role is filled by His67. A Phosphohistidine; by HPr modification is found at His67. The HPr domain occupies 161 to 253 (AERFEWTIAY…LTAQEKADAE (93 aa)). The active-site Pros-phosphohistidine intermediate; for HPr activity is the His175. His175 is subject to Phosphohistidine; by EI. The PTS EI stretch occupies residues 274-838 (AIVGIGASPG…ALEAQREGQA (565 aa)). The Tele-phosphohistidine intermediate; for PTS EI activity role is filled by His460. His460 carries the post-translational modification Phosphohistidine; by autocatalysis. Positions 567 and 603 each coordinate phosphoenolpyruvate. The Mg(2+) site is built by Glu697 and Asp721. Phosphoenolpyruvate contacts are provided by residues 720-721 (ND) and Arg731. The active-site Proton donor is the Cys768.

It belongs to the PEP-utilizing enzyme family. The cofactor is Mg(2+).

It localises to the cytoplasm. The enzyme catalyses L-histidyl-[protein] + phosphoenolpyruvate = N(pros)-phospho-L-histidyl-[protein] + pyruvate. The phosphoenolpyruvate-dependent sugar phosphotransferase system (sugar PTS), a major carbohydrate active transport system, catalyzes the phosphorylation of incoming sugar substrates concomitantly with their translocation across the cell membrane. The enzyme II FruAB PTS system is involved in fructose transport. The sequence is that of Multiphosphoryl transfer protein from Xanthomonas campestris pv. campestris (strain ATCC 33913 / DSM 3586 / NCPPB 528 / LMG 568 / P 25).